A 158-amino-acid chain; its full sequence is Protein-export protein SecB (158 aa).

Belongs to the SecB family. Homotetramer, a dimer of dimers. One homotetramer interacts with 1 SecA dimer.

The protein localises to the cytoplasm. One of the proteins required for the normal export of preproteins out of the cell cytoplasm. It is a molecular chaperone that binds to a subset of precursor proteins, maintaining them in a translocation-competent state. It also specifically binds to its receptor SecA. In Pectobacterium atrosepticum (strain SCRI 1043 / ATCC BAA-672) (Erwinia carotovora subsp. atroseptica), this protein is Protein-export protein SecB.